The chain runs to 293 residues: 4-hydroxy-tetrahydrodipicolinate synthase (293 aa).

Position 45 (Thr-45) interacts with pyruvate. The active-site Proton donor/acceptor is Tyr-133. Lys-161 (schiff-base intermediate with substrate) is an active-site residue. Ile-203 serves as a coordination point for pyruvate.

The protein belongs to the DapA family. In terms of assembly, homotetramer; dimer of dimers.

It is found in the cytoplasm. The catalysed reaction is L-aspartate 4-semialdehyde + pyruvate = (2S,4S)-4-hydroxy-2,3,4,5-tetrahydrodipicolinate + H2O + H(+). It functions in the pathway amino-acid biosynthesis; L-lysine biosynthesis via DAP pathway; (S)-tetrahydrodipicolinate from L-aspartate: step 3/4. Functionally, catalyzes the condensation of (S)-aspartate-beta-semialdehyde [(S)-ASA] and pyruvate to 4-hydroxy-tetrahydrodipicolinate (HTPA). In Exiguobacterium sibiricum (strain DSM 17290 / CCUG 55495 / CIP 109462 / JCM 13490 / 255-15), this protein is 4-hydroxy-tetrahydrodipicolinate synthase.